Consider the following 216-residue polypeptide: MFDISSSNLLISVLVVLFAKQLINAVGKATLENIGWSAYCKVAPKLGDSKFIALDQKNVELAKVSKERKSISAQDQYARWTKLNRQFDKLTGEINKLKEETSASRSYISKYIGYMILVTTTLPIWFFRVWFRKAVLFYFPTGVLPHYLEWFLALPFITTGGVGLTIWMSAVNNVVSSVIFLVKFPFEKEVPFPSKEVGNEKTSINKEEVSGTPAAN.

Over 1–9 (MFDISSSNL) the chain is Lumenal. The chain crosses the membrane as a helical span at residues 10-29 (LISVLVVLFAKQLINAVGKA). Residues 30–116 (TLENIGWSAY…YISKYIGYMI (87 aa)) are Cytoplasmic-facing. The stretch at 54 to 105 (LDQKNVELAKVSKERKSISAQDQYARWTKLNRQFDKLTGEINKLKEETSASR) forms a coiled coil. Residues 117–137 (LVTTTLPIWFFRVWFRKAVLF) form a helical membrane-spanning segment. The Lumenal portion of the chain corresponds to 138–161 (YFPTGVLPHYLEWFLALPFITTGG). A helical membrane pass occupies residues 162-178 (VGLTIWMSAVNNVVSSV). The Cytoplasmic portion of the chain corresponds to 179 to 216 (IFLVKFPFEKEVPFPSKEVGNEKTSINKEEVSGTPAAN). Positions 193–216 (PSKEVGNEKTSINKEEVSGTPAAN) are disordered. Residues 197–209 (VGNEKTSINKEEV) show a composition bias toward basic and acidic residues.

This sequence belongs to the WRB/GET1 family. In terms of assembly, component of the Golgi to ER traffic (GET) complex, which is composed of GET1, GET2 and GET3. Within the complex, GET1 and GET2 form a heterotetramer which is stabilized by phosphatidylinositol binding and which binds to the GET3 homodimer.

Its subcellular location is the endoplasmic reticulum membrane. It localises to the golgi apparatus membrane. Required for the post-translational delivery of tail-anchored (TA) proteins to the endoplasmic reticulum. Together with GET2, acts as a membrane receptor for soluble GET3, which recognizes and selectively binds the transmembrane domain of TA proteins in the cytosol. The GET complex cooperates with the HDEL receptor ERD2 to mediate the ATP-dependent retrieval of resident ER proteins that contain a C-terminal H-D-E-L retention signal from the Golgi to the ER. This chain is Golgi to ER traffic protein 1, found in Debaryomyces hansenii (strain ATCC 36239 / CBS 767 / BCRC 21394 / JCM 1990 / NBRC 0083 / IGC 2968) (Yeast).